The sequence spans 684 residues: ATP-dependent zinc metalloprotease FtsH (684 aa).

At 1–21 the chain is on the cytoplasmic side; that stretch reads MENKNDMFNKTPKSGKPKMFR. A helical membrane pass occupies residues 22–42; the sequence is FNLYWMYGLIFIMLVALYMTN. The Periplasmic portion of the chain corresponds to 43 to 138; that stretch reads DSSGTKELGW…QVRFEEGDDA (96 aa). The helical transmembrane segment at 139-159 threads the bilayer; the sequence is IWNFLVSFGPIILLIGVWMFL. The Cytoplasmic portion of the chain corresponds to 160-684; that stretch reads MRRMSGGTGA…TEENKTGKIA (525 aa). Residue 236–243 participates in ATP binding; that stretch reads GPPGTGKT. His-459 lines the Zn(2+) pocket. Glu-460 is an active-site residue. His-463 and Asp-534 together coordinate Zn(2+). Positions 647-662 are enriched in basic and acidic residues; the sequence is EKANGKNKENADKEAE. Residues 647-684 are disordered; sequence EKANGKNKENADKEAEADATTENVTDTPTEENKTGKIA.

In the central section; belongs to the AAA ATPase family. It in the C-terminal section; belongs to the peptidase M41 family. As to quaternary structure, homohexamer. Zn(2+) is required as a cofactor.

The protein localises to the cell inner membrane. Acts as a processive, ATP-dependent zinc metallopeptidase for both cytoplasmic and membrane proteins. Plays a role in the quality control of integral membrane proteins. In Parabacteroides distasonis (strain ATCC 8503 / DSM 20701 / CIP 104284 / JCM 5825 / NCTC 11152), this protein is ATP-dependent zinc metalloprotease FtsH.